The primary structure comprises 118 residues: uncharacterized protein (118 aa).

Positions 1–18 are cleaved as a signal peptide; that stretch reads MSKLIFLFVVATLATIKA. N-linked (GlcNAc...) asparagine; by host glycosylation is present at N24.

This is an uncharacterized protein from Magallana gigas (Pacific oyster).